A 199-amino-acid chain; its full sequence is Putative DNA-directed RNA polymerase subunit L376 (199 aa).

This sequence belongs to the eukaryotic RPB7/RPC8 RNA polymerase subunit family.

It localises to the virion. It carries out the reaction RNA(n) + a ribonucleoside 5'-triphosphate = RNA(n+1) + diphosphate. This Acanthamoeba polyphaga (Amoeba) protein is Putative DNA-directed RNA polymerase subunit L376.